The primary structure comprises 63 residues: MKHVLNLYLLGVVLTLLSIFVRVMESLEGLLESPSPGTSWTTRSQLANTEPTKGLPDHPSRSM.

Residues 1 to 37 (MKHVLNLYLLGVVLTLLSIFVRVMESLEGLLESPSPG) form a required for targeting to lipid droplets region. The chain crosses the membrane as a helical span at residues 7–23 (LYLLGVVLTLLSIFVRV). The disordered stretch occupies residues 31–63 (LESPSPGTSWTTRSQLANTEPTKGLPDHPSRSM). Polar residues predominate over residues 35 to 51 (SPGTSWTTRSQLANTEP). Phosphoserine is present on S44.

Highly expressed in renal cell carcinoma cells but barely detectable in adjacent normal kidney tissue. Detected in some cervical and endometrial cancers. Expression also detected in fetal kidney with little or no expression observed in normal adult heart, liver, lung, pancreas, prostate or spinal cord (at protein level).

It is found in the lipid droplet. It localises to the secreted. The protein resides in the membrane. Functionally, increases intracellular lipid accumulation. Stimulates expression of cytokines including IL6, MIF and VEGFA. Enhances cell growth and proliferation. In Homo sapiens (Human), this protein is Hypoxia-inducible lipid droplet-associated protein (HILPDA).